The primary structure comprises 447 residues: Crotonyl-CoA reductase (447 aa).

The protein belongs to the zinc-containing alcohol dehydrogenase family. Crotonyl-CoA carboxylase/reductase subfamily. As to quaternary structure, homodimer.

It carries out the reaction butanoyl-CoA + NADP(+) = (2E)-butenoyl-CoA + NADPH + H(+). With respect to regulation, inhibited by divalent cations (30-100%), beta-chloromercuribenzoate (85%), iodoacetamide (40%) and N-ethylmaleamide (80%). The presence of CoA thioesters containing 12-20 carbon atoms results in inhibition of enzyme activity. The greatest degree of inhibition is observed in the presence of palmitoyl-CoA and myristoyl-CoA. The branched-chain fatty acids, isopalmitoyl-CoA and isomyristoyl-CoA are less effective inhibitors of the crotonyl-CoA reductase. Concentrations of NADPH above 200 uM lead to inhibition of enzyme activity. In terms of biological role, may play a role in supplying butyryl-CoA for straight-chain fatty acid biosynthesis. Catalyzes the conversion of crotonyl-CoA to butyryl-CoA. It shows a high substrate specificity for crotonyl-CoA, a short-chain-length (C4), but no measurable activity is observed with shorter (C3) or longer-chain-length enoyl-CoA thioesters. The sequence is that of Crotonyl-CoA reductase (ccr) from Streptomyces collinus.